A 499-amino-acid chain; its full sequence is WD repeat-containing protein 55 homolog (499 aa).

Residues 1–130 (MHTHNNFKTP…EATFDLDVDD (130 aa)) are disordered. 2 stretches are compositionally biased toward acidic residues: residues 12–23 (DEDELDDLDEDM) and 31–48 (IEQEVLNESDSDNDEYDL). The span at 91 to 103 (DDAGGASAGGATS) shows a compositional bias: low complexity. The span at 113–122 (PSGSNRQSEA) shows a compositional bias: polar residues. WD repeat units follow at residues 154–193 (KLEDFITDICFHPDRDIIALATIIGDVHLYEYDNEANKLL), 198–237 (VHSKACRDVEFTEDGRFLLTCSKDKCVMVTDMETEKLKKL), 241–279 (AHDDAINTLHVLNENLFATGDDAGTVKLWDLRTKNAIFE), 282–321 (ELEDQITQLTTNDQNKLLLATSADGYLTTFNIAARKMYVQ), 324–363 (PYEEELSCMGIYRGDSKLVVGTSKGRLYTYNWGQFGYHCD), and 408–447 (QHNMPIESLDVNSSGELIASSSHNNDVRFWNVKYFEDFGD). Residues 480-499 (TKEDADDDDHDPSAGPSNMA) form a disordered region.

This sequence belongs to the WD repeat WDR55 family.

The chain is WD repeat-containing protein 55 homolog from Drosophila yakuba (Fruit fly).